Here is an 88-residue protein sequence, read N- to C-terminus: Small ribosomal subunit protein uS15c (88 aa).

The protein belongs to the universal ribosomal protein uS15 family. In terms of assembly, part of the 30S ribosomal subunit.

Its subcellular location is the plastid. It localises to the chloroplast. This is Small ribosomal subunit protein uS15c (rps15) from Aethionema grandiflorum (Persian stone-cress).